The sequence spans 496 residues: Probable glycine betaine transporter (496 aa).

12 helical membrane passes run 11–31 (TVLYISSAIALLFVLWGVFLP), 49–69 (FGWLYLLAVAIFIIFVFGIAI), 89–109 (FQWFAMLFGGGMGIGLVFWSV), 136–156 (VVFFHWGIHAWVNFAIAGLAL), 188–208 (AIDILAVFATIFGIATSLGLG), 219–239 (IWGIPAGPLTISLVIAVITVI), 260–280 (VWLSVAFMVFIFYFGGKVFIL), 306–326 (WVGGWTIFYWAWWIAWAPFVG), 341–361 (FVFAVTLLPVGFSFIWLAIYG), 396–416 (LYAITGPLAILLIVTCFVGAA), 441–461 (FWGIMQGAMTIVLIVVGGTAA), and 468–488 (ASIASAFPFMLIMLVMCYSIL).

The protein belongs to the BCCT transporter (TC 2.A.15) family.

The protein localises to the cell membrane. Probably acts in the uptake of glycine betaine. May function in the pathway that allows anaerobic methylotrophic growth of D.hafniense using glycine betaine. The polypeptide is Probable glycine betaine transporter (Desulfitobacterium hafniense (strain Y51)).